An 855-amino-acid polypeptide reads, in one-letter code: Dynein axonemal assembly factor 5 (855 aa).

At Ala-2 the chain carries N-acetylalanine. HEAT repeat units follow at residues 71 to 109, 202 to 240, 241 to 278, 280 to 318, 354 to 376, 377 to 414, 599 to 638, 696 to 734, 738 to 776, and 784 to 822; these read GPWA…RAAR, HMQS…FGNG, KSVD…CLRD, YSFF…QWQK, FRNL…VGTR, VKSA…DEEA, GEAL…RATD, RDVQ…TSGG, PEKL…CVKG, and QSSV…LFPD.

Belongs to the DNAAF5 family. In terms of assembly, interacts with DNAI2; probably involved in outer arm dynein assembly. Expressed in nasal epithelium and lung epithelium by ciliated cells (at protein level).

It is found in the cytoplasm. Its subcellular location is the dynein axonemal particle. Cytoplasmic protein involved in the delivery of the dynein machinery to the motile cilium. It is required for the assembly of the axonemal dynein inner and outer arms, two structures attached to the peripheral outer doublet A microtubule of the axoneme, that play a crucial role in cilium motility. This is Dynein axonemal assembly factor 5 from Homo sapiens (Human).